Reading from the N-terminus, the 404-residue chain is Putative CBL-interacting protein kinase 27 (404 aa).

The region spanning 11–266 (YEMGRVLGHG…VAGLLETPWF (256 aa)) is the Protein kinase domain. ATP contacts are provided by residues 17-25 (LGHGNFGRV) and K40. D134 functions as the Proton acceptor in the catalytic mechanism. The segment at 152 to 181 (DFGLSALACHARPDGLLHTACGTPAYVAPE) is activation loop. One can recognise an NAF domain in the interval 294–321 (DKDEPPEVLNAFHLISLSEGFDLSPLFE). Residues 335–356 (AGGTRFATREAASGVVARLEAL) are PPI.

The protein belongs to the protein kinase superfamily. CAMK Ser/Thr protein kinase family. SNF1 subfamily. It depends on Mn(2+) as a cofactor.

It catalyses the reaction L-seryl-[protein] + ATP = O-phospho-L-seryl-[protein] + ADP + H(+). The catalysed reaction is L-threonyl-[protein] + ATP = O-phospho-L-threonyl-[protein] + ADP + H(+). CIPK serine-threonine protein kinases interact with CBL proteins. Binding of a CBL protein to the regulatory NAF domain of CIPK protein lead to the activation of the kinase in a calcium-dependent manner. The chain is Putative CBL-interacting protein kinase 27 (CIPK27) from Oryza sativa subsp. japonica (Rice).